The following is a 1038-amino-acid chain: Eukaryotic translation initiation factor 3 subunit A (1038 aa).

The stretch at 92–121 forms a coiled coil; that stretch reads LKKFIELAEKKVTEAQAKADEIQSSLESAA. Positions 339 to 523 constitute a PCI domain; it reads MTKAVSFVLL…GVLTFDTDVF (185 aa). The stretch at 611-899 forms a coiled coil; that stretch reads IDKKKEAATD…QKQREEEAEA (289 aa). Basic and acidic residues-rich tracts occupy residues 621–632 and 800–901; these read ALQRKQREEETR and RHEE…EARR. 2 disordered regions span residues 621 to 641 and 800 to 1038; these read ALQRKQREEETRKRIRTQQLQ and RHEE…QQGQ. Composition is skewed to low complexity over residues 943 to 952 and 976 to 993; these read KEAAGGAAPE and GASAAAPAAPPSNGAAPS. Residues 1002 to 1019 are compositionally biased toward polar residues; that stretch reads DSGSSTPPSRTQTPATTS.

Belongs to the eIF-3 subunit A family. As to quaternary structure, component of the eukaryotic translation initiation factor 3 (eIF-3) complex.

The protein resides in the cytoplasm. In terms of biological role, RNA-binding component of the eukaryotic translation initiation factor 3 (eIF-3) complex, which is involved in protein synthesis of a specialized repertoire of mRNAs and, together with other initiation factors, stimulates binding of mRNA and methionyl-tRNAi to the 40S ribosome. The eIF-3 complex specifically targets and initiates translation of a subset of mRNAs involved in cell proliferation. In Aspergillus oryzae (strain ATCC 42149 / RIB 40) (Yellow koji mold), this protein is Eukaryotic translation initiation factor 3 subunit A (tif32).